The chain runs to 131 residues: MRHYEIVFMVHPDQSEQVPGMIERYTGAITGAEGKIHRLEDWGRRQLAYSINKLHKAHYVLMNVEASQEVIDELETNFRYNDAVIRSMVMRTKHAVTEASPMVKAKDERRERREDFANETSEETEAGDSEE.

A disordered region spans residues 98–131 (EASPMVKAKDERRERREDFANETSEETEAGDSEE). Residues 104–116 (KAKDERRERREDF) show a composition bias toward basic and acidic residues. Residues 120 to 131 (TSEETEAGDSEE) are compositionally biased toward acidic residues.

It belongs to the bacterial ribosomal protein bS6 family.

Binds together with bS18 to 16S ribosomal RNA. The sequence is that of Small ribosomal subunit protein bS6 from Edwardsiella ictaluri (strain 93-146).